Reading from the N-terminus, the 410-residue chain is Chitin deacetylase 3 (410 aa).

Residues 1–18 form the signal peptide; it reads MYGHLSLSTLSLLAVVAA. Residues 19–39 constitute a propeptide that is removed on maturation; it reads APFPESWLQPRDSDVSQLFRR. 2 N-linked (GlcNAc...) asparagine glycosylation sites follow: Asn61 and Asn80. The 191-residue stretch at 124–314 folds into the NodB homology domain; that stretch reads KVWALSFDDG…KAVANGWSVK (191 aa). Asp131 functions as the Proton acceptor in the catalytic mechanism. Residue Asp131 participates in acetate binding. Residue Asp132 coordinates Co(2+). Asn149 carries N-linked (GlcNAc...) asparagine glycosylation. The Co(2+) site is built by His183 and His187. Residue Tyr225 coordinates acetate. An N-linked (GlcNAc...) asparagine glycan is attached at Asn279. His289 serves as the catalytic Proton donor. A glycan (N-linked (GlcNAc...) asparagine) is linked at Asn293. Ser385 carries the GPI-anchor amidated serine lipid modification. Positions 386 to 410 are cleaved as a propeptide — removed in mature form; it reads SSWPIANRPSLFVIACGLALAAIMV.

The protein belongs to the polysaccharide deacetylase family. It depends on Co(2+) as a cofactor.

The protein localises to the cell membrane. It carries out the reaction [(1-&gt;4)-N-acetyl-beta-D-glucosaminyl](n) + n H2O = chitosan + n acetate. Hydrolyzes the N-acetamido groups of N-acetyl-D-glucosamine residues in chitin to form chitosan and acetate. Chitosan is required to anchor melanin to the cell wall, for maintenance of cell wall integrity, and for proper cytokinesis. Chitosan offers an advantage during infection as it is less readily detected than chitin by host immunosurveillance mechanisms. This chain is Chitin deacetylase 3, found in Cryptococcus neoformans var. neoformans serotype D (strain JEC21 / ATCC MYA-565) (Filobasidiella neoformans).